The sequence spans 309 residues: 4-hydroxy-tetrahydrodipicolinate synthase (309 aa).

T51 is a binding site for pyruvate. Residue Y140 is the Proton donor/acceptor of the active site. K168 acts as the Schiff-base intermediate with substrate in catalysis. Pyruvate is bound at residue I209.

It belongs to the DapA family. As to quaternary structure, homotetramer; dimer of dimers.

The protein resides in the cytoplasm. It catalyses the reaction L-aspartate 4-semialdehyde + pyruvate = (2S,4S)-4-hydroxy-2,3,4,5-tetrahydrodipicolinate + H2O + H(+). The protein operates within amino-acid biosynthesis; L-lysine biosynthesis via DAP pathway; (S)-tetrahydrodipicolinate from L-aspartate: step 3/4. In terms of biological role, catalyzes the condensation of (S)-aspartate-beta-semialdehyde [(S)-ASA] and pyruvate to 4-hydroxy-tetrahydrodipicolinate (HTPA). This is 4-hydroxy-tetrahydrodipicolinate synthase from Streptococcus uberis (strain ATCC BAA-854 / 0140J).